The chain runs to 491 residues: MLELPIISITIFLPLISVLYILLFFNQNKKADKLSIYVAMLSSVLTFISTIYILIEFDVSNNTYQFVERYTWLDKIGLEFHVGVDGIAIFFVVLTSFLTLICIIGSLFTIKKYIKEYLVCFLLMESLCIGAFTSINLLLFYLFFEAILVPMYIIIGVWGGDNRIYAALKFFLYTFFGSVFFLLALIYIYSKIHSFDLTNILELIGNIPLFAQKILWWAIFIAFAIKTPMIPFHTWLPDAHVQAPTTGSVILAGILLKLGGYGFLRVLLPLFPNASQEFAIYVIYLSVIAIIYASLVALAQKDIKQMIAYSSIAHMGYVTIGIFSFTEIGISGAIFQMLSHGIISSSLFLIVGTLYERLHTKEIAKYGGVANKMPILATFFMIAMLSSIGLPSTSGFIGEFLSLLGIYKVNVVTAFIAALGIILGAVYMLKLYKEVMLGEITNTEIKHFRDLYKYEIISIAPLILLIIYFGLMPNSILNVFHLSVENLLIKF.

The next 14 membrane-spanning stretches (helical) occupy residues 5 to 25, 35 to 55, 87 to 107, 116 to 136, 137 to 157, 170 to 190, 203 to 223, 249 to 269, 278 to 298, 315 to 335, 336 to 356, 373 to 393, 409 to 429, and 456 to 476; these read PIIS…LLFF, SIYV…YILI, IAIF…IGSL, EYLV…TSIN, LLLF…IIGV, FFLY…YIYS, LIGN…FIAF, VILA…VLLP, FAIY…LVAL, MGYV…GAIF, QMLS…TLYE, MPIL…LPST, VNVV…VYML, and IISI…PNSI.

This sequence belongs to the complex I subunit 4 family.

It is found in the cell membrane. It carries out the reaction a quinone + NADH + 5 H(+)(in) = a quinol + NAD(+) + 4 H(+)(out). Functionally, NDH-1 shuttles electrons from NADH, via FMN and iron-sulfur (Fe-S) centers, to quinones in the respiratory chain. Couples the redox reaction to proton translocation (for every two electrons transferred, four hydrogen ions are translocated across the cytoplasmic membrane), and thus conserves the redox energy in a proton gradient. In Rickettsia prowazekii (strain Madrid E), this protein is NADH-quinone oxidoreductase subunit M (nuoM).